An 89-amino-acid polypeptide reads, in one-letter code: MAPGRGVLLLICLCLMDNVSQVVCSQNSTTPSKFPTFYSYDCNADTYAPQLTSFSTIWTLLNVLVMTIACVIYLIYMCFNKFVATMTNT.

The signal sequence occupies residues 1 to 24 (MAPGRGVLLLICLCLMDNVSQVVC). The Virion surface portion of the chain corresponds to 25–56 (SQNSTTPSKFPTFYSYDCNADTYAPQLTSFST). The helical transmembrane segment at 57–77 (IWTLLNVLVMTIACVIYLIYM) threads the bilayer. Topologically, residues 78–89 (CFNKFVATMTNT) are intravirion.

This sequence belongs to the herpesviridae glycoprotein N family. As to quaternary structure, interacts (via N-terminus) with gM (via N-terminus). The gM-gN heterodimer forms the gCII complex.

The protein resides in the virion membrane. The protein localises to the host membrane. Its subcellular location is the host Golgi apparatus. It is found in the host trans-Golgi network. Envelope glycoprotein necessary for proper maturation of gM and modulation of its membrane fusion activity. Also plays a critical role in virion morphogenesis. This is Envelope glycoprotein N from Equine herpesvirus 2 (strain 86/87) (EHV-2).